Here is a 431-residue protein sequence, read N- to C-terminus: Serine--tRNA ligase (431 aa).

Thr237–Glu239 contacts L-serine. Residue Arg268–Glu270 coordinates ATP. Glu291 contacts L-serine. ATP is bound at residue Glu355 to Ser358. Position 390 (Ser390) interacts with L-serine.

Belongs to the class-II aminoacyl-tRNA synthetase family. Type-1 seryl-tRNA synthetase subfamily. Homodimer. The tRNA molecule binds across the dimer.

The protein localises to the cytoplasm. The catalysed reaction is tRNA(Ser) + L-serine + ATP = L-seryl-tRNA(Ser) + AMP + diphosphate + H(+). It catalyses the reaction tRNA(Sec) + L-serine + ATP = L-seryl-tRNA(Sec) + AMP + diphosphate + H(+). Its pathway is aminoacyl-tRNA biosynthesis; selenocysteinyl-tRNA(Sec) biosynthesis; L-seryl-tRNA(Sec) from L-serine and tRNA(Sec): step 1/1. Its function is as follows. Catalyzes the attachment of serine to tRNA(Ser). Is also able to aminoacylate tRNA(Sec) with serine, to form the misacylated tRNA L-seryl-tRNA(Sec), which will be further converted into selenocysteinyl-tRNA(Sec). The chain is Serine--tRNA ligase from Neisseria meningitidis serogroup C (strain 053442).